The following is a 502-amino-acid chain: uncharacterized protein (502 aa).

A helical membrane pass occupies residues 1-21; sequence MKIFLVFLSVFFFNGCFGLVY. PLD phosphodiesterase domains follow at residues 162–189 and 396–423; these read IKKRMHNKLFIVDNFAVIIGGRNIGDNY and TKHSLHGKTIVFDDNLTLLGSFNIDPRS.

It belongs to the phospholipase D family. Cardiolipin synthase subfamily.

It is found in the cell membrane. This is an uncharacterized protein from Helicobacter pylori (strain ATCC 700392 / 26695) (Campylobacter pylori).